The following is a 771-amino-acid chain: Kojibiose phosphorylase (771 aa).

A substrate-binding site is contributed by 358–359; it reads WD. Glu-498 (proton donor) is an active-site residue. Position 611 to 612 (611 to 612) interacts with substrate; that stretch reads KQ.

It belongs to the glycosyl hydrolase 65 family.

It carries out the reaction kojibiose + phosphate = beta-D-glucose 1-phosphate + D-glucose. Its function is as follows. Catalyzes the reversible phosphorolysis of kojibiose into beta-D-glucose 1-phosphate (Glc1P) and D-glucose. The polypeptide is Kojibiose phosphorylase (kojP) (Caldanaerobacter subterraneus subsp. tengcongensis (strain DSM 15242 / JCM 11007 / NBRC 100824 / MB4) (Thermoanaerobacter tengcongensis)).